The following is a 1883-amino-acid chain: AF4/FMR2 family member lilli (1883 aa).

Over residues 1 to 45 the composition is skewed to low complexity; it reads MAQQQQQQHLQQQQQQHHQQQQLQQLQQQQQLPQYNNNLYNLNYN. Disordered stretches follow at residues 1–88, 140–311, 329–381, 449–540, 609–654, 796–827, 844–901, 922–962, 992–1018, 1039–1075, 1115–1145, 1170–1238, 1358–1413, 1450–1510, 1543–1583, 1595–1641, and 1783–1803; these read MAQQ…SEGD, INST…EKDI, SIAA…SCTT, MPTP…HHQH, LGGG…HLSR, SISS…TLQI, MQQK…KKHA, TAAA…LAKG, VAGS…LHAA, TAAA…ATAT, KNNR…QHKQ, QHQQ…KSDK, YAAE…GART, EHGV…DQVS, ANGS…KATT, QTST…PPSD, and PSNS…RIVP. Residues 57–80 are compositionally biased toward basic and acidic residues; that stretch reads REKYERQQGIQSDDRETSLFEAPR. 4 stretches are compositionally biased toward low complexity: residues 140-154, 161-178, 223-253, and 362-381; these read INST…SLLP, QQQQ…QQQQ, SASS…ASTA, and PLNS…SCTT. The segment covering 450-462 has biased composition (pro residues); sequence PTPPKASPTPPTA. Residue T458 is modified to Phosphothreonine. Residues 466–479 show a composition bias toward basic and acidic residues; the sequence is LKSEKNHSLEKQDS. A compositionally biased stretch (acidic residues) spans 481-491; it reads LENDLELSESD. 2 positions are modified to phosphoserine: S488 and S490. Residues 500 to 540 are compositionally biased toward low complexity; sequence SAGNSSNSSETDSSESGSEASSKGEAQQQQQQQQQLLHHQH. Positions 609–625 are enriched in gly residues; it reads LGGGGGSGSTGGGGGSS. Low complexity-rich tracts occupy residues 626-639 and 796-813; these read SSGM…SSSN and SISS…SAAG. Positions 867–877 are enriched in basic residues; the sequence is PRQKKPRKKKM. Phosphoserine is present on residues S887 and S888. Residues 930–942 constitute a DNA-binding region (a.T hook); the sequence is KKGRGRPRKQQQQ. Residues 939-962 are compositionally biased toward low complexity; sequence QQQQLQQTQSGNLSSASAGSLAKG. S953 and S955 each carry phosphoserine. Low complexity-rich tracts occupy residues 1124-1145, 1170-1186, 1200-1222, 1362-1376, and 1385-1399; these read SSSN…QHKQ, QHQQ…QQQQ, SSSS…SSSS, QQQQ…QQLH, and HYQQ…KAQQ. Residues 1450–1467 show a composition bias toward basic and acidic residues; that stretch reads EHGVKPEPELDAGYEAKY. S1546 carries the phosphoserine modification. Position 1548 is a phosphothreonine (T1548). 2 stretches are compositionally biased toward low complexity: residues 1558–1583 and 1595–1606; these read QQQQ…KATT and QTSTTATQQPTT. Pro residues predominate over residues 1614 to 1625; sequence TPPPVAPPPPPR. Positions 1783–1794 are enriched in low complexity; the sequence is PSNSVGSQGSGS.

The protein belongs to the AF4 family.

Its subcellular location is the nucleus. Has a role in transcriptional regulation. Acts in parallel with the Ras/MAPK and the PI3K/PKB pathways in the control of cell identity and cellular growth. Essential for regulation of the cytoskeleton and cell growth but not for cell proliferation or growth rate. Required specifically for the microtubule-based basal transport of lipid droplets. Plays a partially redundant function downstream of Raf in cell fate specification in the developing eye. Pair-rule protein that regulates embryonic cellularization, gastrulation and segmentation. This is AF4/FMR2 family member lilli from Drosophila grimshawi (Hawaiian fruit fly).